The following is a 532-amino-acid chain: Metal-staphylopine-binding protein CntA (532 aa).

The N-terminal stretch at 1-20 is a signal peptide; sequence MRKLTKMSAMLLASGLILTG. A lipid anchor (N-palmitoyl cysteine) is attached at Cys-21. The S-diacylglycerol cysteine moiety is linked to residue Cys-21. Staphylopine is bound by residues Arg-165, Arg-418, and Asn-448.

Belongs to the bacterial solute-binding protein 5 family. The complex is composed of two ATP-binding proteins (CntD and CntF), two transmembrane proteins (CntB and CntC) and a solute-binding protein (CntA).

The protein localises to the cell membrane. Functionally, part of the ABC transporter complex CntABCDF (Opp1) involved in the uptake of metal in complex with the metallophore staphylopine (StP). May be involved in the import of a large array of divalent metals ions such as nickel, cobalt, zinc, copper and iron. Binds the metal via the metallophore StP, and transfers the StP-metal complex to the membrane-bound permease. The polypeptide is Metal-staphylopine-binding protein CntA (Staphylococcus aureus (strain Mu50 / ATCC 700699)).